The sequence spans 374 residues: Alcohol dehydrogenase class-3 (374 aa).

Ala-2 bears the N-acetylalanine mark. Residues Cys-45, His-67, Cys-97, Cys-100, Cys-103, Cys-111, and Cys-174 each coordinate Zn(2+). N6-succinyllysine is present on Lys-233. A Phosphoserine modification is found at Ser-247. The residue at position 315 (Lys-315) is an N6-succinyllysine. 2 positions are modified to phosphoserine: Ser-324 and Ser-351.

This sequence belongs to the zinc-containing alcohol dehydrogenase family. Class-III subfamily. In terms of assembly, homodimer. Zn(2+) is required as a cofactor.

It localises to the cytoplasm. It carries out the reaction a primary alcohol + NAD(+) = an aldehyde + NADH + H(+). The catalysed reaction is a secondary alcohol + NAD(+) = a ketone + NADH + H(+). It catalyses the reaction S-(hydroxymethyl)glutathione + NADP(+) = S-formylglutathione + NADPH + H(+). The enzyme catalyses S-(hydroxymethyl)glutathione + NAD(+) = S-formylglutathione + NADH + H(+). It carries out the reaction 20-oxo-(5Z,8Z,11Z,14Z)-eicosatetraenoate + NAD(+) + H2O = (5Z,8Z,11Z,14Z)-eicosatetraenedioate + NADH + 2 H(+). The catalysed reaction is 20-hydroxy-(5Z,8Z,11Z,14Z)-eicosatetraenoate + NAD(+) = 20-oxo-(5Z,8Z,11Z,14Z)-eicosatetraenoate + NADH + H(+). It catalyses the reaction S-nitrosoglutathione + NADH + H(+) = S-(hydroxysulfenamide)glutathione + NAD(+). Catalyzes the oxidation of long-chain primary alcohols and the oxidation of S-(hydroxymethyl) glutathione. Also oxidizes long chain omega-hydroxy fatty acids, such as 20-HETE, producing both the intermediate aldehyde, 20-oxoarachidonate and the end product, a dicarboxylic acid, (5Z,8Z,11Z,14Z)-eicosatetraenedioate. Class-III ADH is remarkably ineffective in oxidizing ethanol. Required for clearance of cellular formaldehyde, a cytotoxic and carcinogenic metabolite that induces DNA damage. Also acts as a S-nitroso-glutathione reductase by catalyzing the NADH-dependent reduction of S-nitrosoglutathione, thereby regulating protein S-nitrosylation. The sequence is that of Alcohol dehydrogenase class-3 from Homo sapiens (Human).